A 452-amino-acid chain; its full sequence is Dimethyladenosine transferase 2, mitochondrial (452 aa).

3 residues coordinate S-adenosyl-L-methionine: I46, E99, and D125. The segment at 408-452 is disordered; the sequence is ANDEPNLEDGVTLPEEDDAEADEIIEEESPVPATTPVKRRRKASS. Residues 421-436 show a composition bias toward acidic residues; that stretch reads PEEDDAEADEIIEEES.

This sequence belongs to the class I-like SAM-binding methyltransferase superfamily. rRNA adenine N(6)-methyltransferase family. KsgA subfamily.

It is found in the mitochondrion. Probable S-adenosyl-L-methionine-dependent methyltransferase which specifically dimethylates mitochondrial 12S rRNA at the conserved stem loop. Also required for basal transcription of mitochondrial DNA. Also regulates mitochondrial DNA copy number. Stimulates transcription independently of the methyltransferase activity. The protein is Dimethyladenosine transferase 2, mitochondrial (mtTFB2) of Drosophila melanogaster (Fruit fly).